The sequence spans 133 residues: ATP synthase epsilon chain, chloroplastic (133 aa).

The protein belongs to the ATPase epsilon chain family. F-type ATPases have 2 components, CF(1) - the catalytic core - and CF(0) - the membrane proton channel. CF(1) has five subunits: alpha(3), beta(3), gamma(1), delta(1), epsilon(1). CF(0) has three main subunits: a, b and c.

The protein resides in the plastid. Its subcellular location is the chloroplast thylakoid membrane. Functionally, produces ATP from ADP in the presence of a proton gradient across the membrane. The sequence is that of ATP synthase epsilon chain, chloroplastic from Helianthus annuus (Common sunflower).